The following is a 284-amino-acid chain: Plastid-lipid-associated protein 6, chloroplastic (284 aa).

A compositionally biased stretch (low complexity) spans 1–11; sequence MATSSTFSSLL. The disordered stretch occupies residues 1–47; sequence MATSSTFSSLLPSPPALLSDHRSPPPSIRYSFSPLTTPKSSRLGFTV. The transit peptide at 1–72 directs the protein to the chloroplast; sequence MATSSTFSSL…SIGGESDPPP (72 aa). Residues Ser96, Ser105, Ser148, Ser151, and Ser155 each carry the phosphoserine modification.

Belongs to the PAP/fibrillin family. As to quaternary structure, part of the Photosystem II light-harvesting complex (LHCII). In terms of processing, phosphorylated as part of a basal defense response.

The protein localises to the plastid. It localises to the chloroplast. The protein resides in the plastoglobule. Its function is as follows. Required for plastoglobule development and resistance to multiple stresses. Regulates plastoglobule osmiophilic content. May be involved in the transport of lipophilic antioxidants in and out of the plastoglobule. The polypeptide is Plastid-lipid-associated protein 6, chloroplastic (Arabidopsis thaliana (Mouse-ear cress)).